We begin with the raw amino-acid sequence, 1300 residues long: Serine protease EspP (1300 aa).

Residues 1 to 55 form the signal peptide; that stretch reads MNKIYSLKYSHITGGLIAVSELSGRVSSRATGKKKHKRILALCFLGLLQSSYSFA. The 255-residue stretch at 57–311 folds into the Peptidase S6 domain; that stretch reads QMDISNFYIR…NQTTIDNLKN (255 aa). Residues His127, Asp156, and Ser263 each act as charge relay system in the active site. Positions 1034–1300 constitute an Autotransporter domain; it reads DINGEAGAWA…AVNANFRYSF (267 aa).

Cleaved to release the mature protein from the outer membrane.

The protein resides in the periplasm. It is found in the secreted. It localises to the cell surface. The protein localises to the cell outer membrane. In terms of biological role, serine protease with cytotoxic effect. Disrupts actin cytoskeleton resulting cell detachment in vitro. The polypeptide is Serine protease EspP (espP) (Escherichia coli).